Reading from the N-terminus, the 80-residue chain is Exodeoxyribonuclease 7 small subunit (80 aa).

This sequence belongs to the XseB family. As to quaternary structure, heterooligomer composed of large and small subunits.

The protein resides in the cytoplasm. It catalyses the reaction Exonucleolytic cleavage in either 5'- to 3'- or 3'- to 5'-direction to yield nucleoside 5'-phosphates.. Its function is as follows. Bidirectionally degrades single-stranded DNA into large acid-insoluble oligonucleotides, which are then degraded further into small acid-soluble oligonucleotides. This Lactobacillus helveticus (strain DPC 4571) protein is Exodeoxyribonuclease 7 small subunit.